The sequence spans 417 residues: uncharacterized protein (417 aa).

10 consecutive transmembrane segments (helical) span residues 21–41, 50–70, 88–108, 166–186, 217–237, 255–275, 283–303, 308–328, 351–371, and 373–393; these read ISSL…AFQL, LLMM…GLLA, LTVI…LLSV, SVFY…FFLP, MPLL…LQIG, LAGW…AITG, LLYF…APFL, IAGI…FGLV, AIQS…GVLA, and WIGV…IGLI.

Belongs to the major facilitator superfamily. TCR/Tet family.

It localises to the cell membrane. This is an uncharacterized protein from Bacillus subtilis (strain 168).